A 442-amino-acid chain; its full sequence is Adenylosuccinate synthetase (442 aa).

Residues Gly-25–Lys-31, Gly-53–Thr-55, and Lys-62 contribute to the GTP site. Asp-26 acts as the Proton acceptor in catalysis. Mg(2+) contacts are provided by Asp-26 and Gly-53. Residues Asp-26–Lys-29 and Asn-51–His-54 contribute to the IMP site. The active-site Proton donor is the His-54. IMP is bound by residues Thr-141, Arg-155, Asn-232, and Thr-247. Residue Thr-307 participates in GTP binding. Thr-307 to Arg-313 provides a ligand contact to substrate. Arg-311 contacts IMP. GTP is bound by residues Arg-313, Lys-339–Asp-341, and Gly-425–Gly-427.

This sequence belongs to the adenylosuccinate synthetase family. In terms of assembly, homodimer. It depends on Mg(2+) as a cofactor.

The protein localises to the cytoplasm. The catalysed reaction is IMP + L-aspartate + GTP = N(6)-(1,2-dicarboxyethyl)-AMP + GDP + phosphate + 2 H(+). It participates in purine metabolism; AMP biosynthesis via de novo pathway; AMP from IMP: step 1/2. In terms of biological role, plays an important role in the salvage pathway for purine nucleotide biosynthesis. Catalyzes the first committed step in the biosynthesis of AMP from IMP. This chain is Adenylosuccinate synthetase (Adss), found in Plasmodium falciparum (isolate 3D7).